A 691-amino-acid polypeptide reads, in one-letter code: DNA ligase (691 aa).

NAD(+) contacts are provided by residues 41-45 (DAEYD), 90-91 (SL), and Glu130. Lys132 serves as the catalytic N6-AMP-lysine intermediate. NAD(+)-binding residues include Arg153, Glu190, Lys307, and Lys331. Positions 425, 428, 443, and 449 each coordinate Zn(2+). Residues 610–691 (APQGVLAGKT…LHQLLEGNTP (82 aa)) form the BRCT domain.

This sequence belongs to the NAD-dependent DNA ligase family. LigA subfamily. The cofactor is Mg(2+). Mn(2+) serves as cofactor.

It catalyses the reaction NAD(+) + (deoxyribonucleotide)n-3'-hydroxyl + 5'-phospho-(deoxyribonucleotide)m = (deoxyribonucleotide)n+m + AMP + beta-nicotinamide D-nucleotide.. Functionally, DNA ligase that catalyzes the formation of phosphodiester linkages between 5'-phosphoryl and 3'-hydroxyl groups in double-stranded DNA using NAD as a coenzyme and as the energy source for the reaction. It is essential for DNA replication and repair of damaged DNA. This Burkholderia ambifaria (strain ATCC BAA-244 / DSM 16087 / CCUG 44356 / LMG 19182 / AMMD) (Burkholderia cepacia (strain AMMD)) protein is DNA ligase.